Here is a 394-residue protein sequence, read N- to C-terminus: Cell division protein FtsZ (394 aa).

GTP contacts are provided by residues 21–25 (GGGGN), 108–110 (GTG), glutamate 139, arginine 143, and aspartate 187.

The protein belongs to the FtsZ family. Homodimer. Polymerizes to form a dynamic ring structure in a strictly GTP-dependent manner. Interacts directly with several other division proteins.

It is found in the cytoplasm. Its function is as follows. Essential cell division protein that forms a contractile ring structure (Z ring) at the future cell division site. The regulation of the ring assembly controls the timing and the location of cell division. One of the functions of the FtsZ ring is to recruit other cell division proteins to the septum to produce a new cell wall between the dividing cells. Binds GTP and shows GTPase activity. This Azotobacter vinelandii protein is Cell division protein FtsZ.